The following is a 541-amino-acid chain: Ankyrin repeat domain-containing protein 13C (541 aa).

The span at 1–20 (MTGEKIRSLRRDHKPSKEEG) shows a compositional bias: basic and acidic residues. Residues 1-27 (MTGEKIRSLRRDHKPSKEEGDLLEPGD) form a disordered region. 3 ANK repeats span residues 111-142 (PAHY…QKDN), 143-172 (HGNT…PVKV), and 176-205 (QGWS…QQSR). S411 bears the Phosphoserine mark.

It is found in the endoplasmic reticulum membrane. In terms of biological role, acts as a molecular chaperone for G protein-coupled receptors, regulating their biogenesis and exit from the ER. The polypeptide is Ankyrin repeat domain-containing protein 13C (ANKRD13C) (Homo sapiens (Human)).